Here is a 539-residue protein sequence, read N- to C-terminus: Chaperonin GroEL (539 aa).

ATP-binding positions include 30-33, K51, 87-91, G415, 479-481, and D495; these read TLGP, DGTTT, and NAA.

The protein belongs to the chaperonin (HSP60) family. As to quaternary structure, forms a cylinder of 14 subunits composed of two heptameric rings stacked back-to-back. Interacts with the co-chaperonin GroES.

Its subcellular location is the cytoplasm. It carries out the reaction ATP + H2O + a folded polypeptide = ADP + phosphate + an unfolded polypeptide.. Its function is as follows. Together with its co-chaperonin GroES, plays an essential role in assisting protein folding. The GroEL-GroES system forms a nano-cage that allows encapsulation of the non-native substrate proteins and provides a physical environment optimized to promote and accelerate protein folding. The polypeptide is Chaperonin GroEL (Enterobacter agglomerans (Erwinia herbicola)).